The following is a 147-amino-acid chain: Interleukin-4 (147 aa).

Residues 1 to 19 (MGLRPQLAAILLCLLACTG) form the signal peptide. N-linked (GlcNAc...) asparagine glycosylation is found at asparagine 20, asparagine 61, asparagine 90, and asparagine 117. 2 cysteine pairs are disulfide-bonded: cysteine 47–cysteine 87 and cysteine 69–cysteine 114.

The protein belongs to the IL-4/IL-13 family.

The protein resides in the secreted. In terms of biological role, participates in at least several B-cell activation processes as well as of other cell types. It is a costimulator of DNA-synthesis. It induces the expression of class II MHC molecules on resting B-cells. It enhances both secretion and cell surface expression of IgE and IgG1. It also regulates the expression of the low affinity Fc receptor for IgE (CD23) on both lymphocytes and monocytes. Positively regulates IL31RA expression in macrophages. Stimulates autophagy in dendritic cells by interfering with mTORC1 signaling and through the induction of RUFY4. In Mesocricetus auratus (Golden hamster), this protein is Interleukin-4 (IL4).